The sequence spans 138 residues: Histone H2B.8 (138 aa).

The span at Met1–Glu38 shows a compositional bias: basic and acidic residues. The disordered stretch occupies residues Met1–Lys45. Ala2 carries the n,N,N-trimethylalanine; alternate modification. Ala2 is subject to N,N-dimethylalanine; alternate. Ala2 bears the N-methylalanine; alternate mark. N6-methyllysine is present on Lys4. 2 positions are modified to N6-acetyllysine: Lys8 and Lys13. Lys14 is modified (N6,N6-dimethyllysine). 4 positions are modified to N6-acetyllysine: Lys18, Lys23, Lys29, and Lys30. Residue Lys134 forms a Glycyl lysine isopeptide (Lys-Gly) (interchain with G-Cter in ubiquitin) linkage.

The protein belongs to the histone H2B family. As to quaternary structure, the nucleosome is a histone octamer containing two molecules each of H2A, H2B, H3 and H4 assembled in one H3-H4 heterotetramer and two H2A-H2B heterodimers. The octamer wraps approximately 147 bp of DNA. Post-translationally, can be acetylated to form H2BK6ac, H2BK33ac and H2BK34ac. Monoubiquitinated by BRE1 to form H2BK143ub1 and deubiquitinated by UBP26. Required for heterochromatic histone H3 di- and trimethylation at H3K4me. May give a specific tag for epigenetic transcriptional activation.

It localises to the nucleus. It is found in the chromosome. In terms of biological role, core component of nucleosome. Nucleosomes wrap and compact DNA into chromatin, limiting DNA accessibility to the cellular machineries which require DNA as a template. Histones thereby play a central role in transcription regulation, DNA repair, DNA replication and chromosomal stability. DNA accessibility is regulated via a complex set of post-translational modifications of histones, also called histone code, and nucleosome remodeling. The protein is Histone H2B.8 of Arabidopsis thaliana (Mouse-ear cress).